A 687-amino-acid chain; its full sequence is Protein 4.2 (687 aa).

The N-myristoyl glycine moiety is linked to residue Gly-2. Residues 31–39 (LFVRRGQPF) form a band 3 binding region. Ser-247 bears the Phosphoserine mark.

This sequence belongs to the transglutaminase superfamily. Transglutaminase family. In terms of assembly, component of the ankyrin-1 complex in the erythrocyte, composed of ANK1, RHCE, RHAG, SLC4A1, EPB42, GYPA, GYPB and AQP1. Interacts with SLC4A1 (via the cytoplasmic domain); this interaction is mediated by the SLC4A1 Band 3-I dimer. Interacts with ANK1 (via ANK 1-13 repeats). Interacts with AQP1 (via the C-terminal).

It is found in the cell membrane. The protein resides in the cytoplasm. The protein localises to the cytoskeleton. Its function is as follows. Component of the ankyrin-1 complex, a multiprotein complex involved in the stability and shape of the erythrocyte membrane. This chain is Protein 4.2, found in Bos taurus (Bovine).